The following is a 414-amino-acid chain: Isocitrate dehydrogenase [NADP] cytoplasmic (414 aa).

At Ser2 the chain carries N-acetylserine. Tyr42 carries the post-translational modification Phosphotyrosine. An NADP(+)-binding site is contributed by 75-77 (TIT). Thr77 lines the substrate pocket. Lys81 carries the post-translational modification N6-acetyllysine. Arg82 contacts NADP(+). Substrate is bound by residues 94–100 (SPNGTIR) and Arg109. Lys126 carries the N6-succinyllysine modification. Substrate contacts are provided by Arg132 and Lys212. An N6-acetyllysine mark is found at Lys224, Lys233, and Lys243. Position 252 (Asp252) interacts with Mn(2+). Lys260 contributes to the NADP(+) binding site. Residues Asp275 and Asp279 each contribute to the Mn(2+) site. 310 to 315 (GTVTRH) contacts NADP(+). Lys321 bears the N6-acetyllysine mark. An NADP(+)-binding site is contributed by Asn328. Ser389 is modified (phosphoserine). Lys400 is modified (N6-succinyllysine).

Belongs to the isocitrate and isopropylmalate dehydrogenases family. Homodimer. Mg(2+) is required as a cofactor. Requires Mn(2+) as cofactor. In terms of processing, acetylation at Lys-374 dramatically reduces catalytic activity.

It is found in the cytoplasm. The protein resides in the cytosol. The enzyme catalyses D-threo-isocitrate + NADP(+) = 2-oxoglutarate + CO2 + NADPH. Functionally, catalyzes the NADP(+)-dependent oxidative decarboxylation of isocitrate (D-threo-isocitrate) to 2-ketoglutarate (2-oxoglutarate), which is required by other enzymes such as the phytanoyl-CoA dioxygenase. Plays a critical role in the generation of NADPH, an important cofactor in many biosynthesis pathways. May act as a corneal epithelial crystallin and may be involved in maintaining corneal epithelial transparency. In Microtus ochrogaster (Prairie vole), this protein is Isocitrate dehydrogenase [NADP] cytoplasmic (IDH1).